Here is a 145-residue protein sequence, read N- to C-terminus: Large ribosomal subunit protein uL13 (145 aa).

Belongs to the universal ribosomal protein uL13 family. As to quaternary structure, part of the 50S ribosomal subunit. Binds to Obg (AC P20964).

In terms of biological role, this protein is one of the early assembly proteins of the 50S ribosomal subunit, although it is not seen to bind rRNA by itself. It is important during the early stages of 50S assembly. In Bacillus subtilis (strain 168), this protein is Large ribosomal subunit protein uL13.